The primary structure comprises 298 residues: Estradiol 17-beta-dehydrogenase 11 (298 aa).

The first 21 residues, 1–21, serve as a signal peptide directing secretion; the sequence is MKYLLDLILLLPLLIVFCIES. 40-64 serves as a coordination point for NADP(+); that stretch reads LITGAGHGIGRLTAYEFAKLNTKLV. Ser172 contacts substrate. The active-site Proton acceptor is the Tyr185.

This sequence belongs to the short-chain dehydrogenases/reductases (SDR) family. 17-beta-HSD 3 subfamily.

The protein localises to the endoplasmic reticulum. The protein resides in the lipid droplet. It carries out the reaction 17beta-estradiol + NAD(+) = estrone + NADH + H(+). It catalyses the reaction 17beta-estradiol + NADP(+) = estrone + NADPH + H(+). Can convert androstan-3-alpha,17-beta-diol (3-alpha-diol) to androsterone in vitro, suggesting that it may participate in androgen metabolism during steroidogenesis. May act by metabolizing compounds that stimulate steroid synthesis and/or by generating metabolites that inhibit it. Has no activity toward DHEA (dehydroepiandrosterone), or A-dione (4-androste-3,17-dione), and only a slight activity toward testosterone to A-dione. This is Estradiol 17-beta-dehydrogenase 11 (Hsd17b11) from Rattus norvegicus (Rat).